Here is an 81-residue protein sequence, read N- to C-terminus: Small ribosomal subunit protein uS15 (81 aa).

It belongs to the universal ribosomal protein uS15 family. In terms of assembly, part of the 30S ribosomal subunit. Forms a bridge to the 50S subunit in the 70S ribosome, contacting the 23S rRNA.

Functionally, one of the primary rRNA binding proteins, it binds directly to 16S rRNA where it helps nucleate assembly of the platform of the 30S subunit by binding and bridging several RNA helices of the 16S rRNA. Forms an intersubunit bridge (bridge B4) with the 23S rRNA of the 50S subunit in the ribosome. The sequence is that of Small ribosomal subunit protein uS15 from Mesomycoplasma hyorhinis (Mycoplasma hyorhinis).